Here is a 65-residue protein sequence, read N- to C-terminus: UPF0434 protein IL1511 (65 aa).

The protein belongs to the UPF0434 family.

This is UPF0434 protein IL1511 from Idiomarina loihiensis (strain ATCC BAA-735 / DSM 15497 / L2-TR).